The following is a 249-amino-acid chain: MSSVTLTTTTTTTSTPPKPTPKDEPQEQIYTPWRLFIYDIWVLGIVSTLAWGCRISTYLIPLFRSNVGKKHLDIGAGTGYYLNQARIPSTTQLTIVDNETHALNVALARCKHPSTQTHGIVTDILQPSPFPETYLTNNDKKFDSVSMYYLLHCLPVPVASKCKIFTHLKKYMTEDGVVHGANVLGKGVRKDNWFARIIRRGCLNHGVFHNEEDNAYEFERALRENFWEVETWVVGSVFVFRAKRPILDA.

Residues 1-15 (MSSVTLTTTTTTTST) show a composition bias toward low complexity. Positions 1 to 26 (MSSVTLTTTTTTTSTPPKPTPKDEPQ) are disordered.

This sequence belongs to the methyltransferase superfamily.

The catalysed reaction is 2-acetyl-3,4a,8,10,11,12a-hexahydroxy-1,4,4a,5,12,12a-hexahydrotetracene-1,12-dione + S-adenosyl-L-methionine = TAN-1612 + S-adenosyl-L-homocysteine + H(+). It participates in secondary metabolite biosynthesis. Functionally, O-methyltransferase; part of the gene cluster that mediates the biosynthesis of the linear tetracyclic TAN-1612 neuropeptide Y receptor antagonist. The decaketide backbone of TAN-1612 is synthesized by the non-reducing polyketide synthase adaA via condensation of one acetyl-CoA starter unit with 9 malonyl-CoA units. The FAD-dependent monooxygenase adaC then performs hydroxylation at C2 while the polaketide chain is still attached to the NRPKS adaA. The alpha-hydroxylation step at C2 appears to be crucial for the following C18-C1 Claisen cyclization and release of the C9-hydroxyl version of TAN-1612 from the NRPKS adaA, two steps performed by the lactamase-like protein adaB. Finally, the O-methyltransferase adaD performs the C9 O-methylation to complete the biosynthesis of TAN-1612. In Aspergillus niger (strain ATCC MYA-4892 / CBS 513.88 / FGSC A1513), this protein is O-methyltransferase adaD.